The chain runs to 346 residues: Annexin A1 (346 aa).

Ala-2 carries the N-acetylalanine modification. Phosphoserine; by TRPM7 is present on Ser-5. Gln-19 is covalently cross-linked (Isoglutamyl lysine isopeptide (Gln-Lys) (interchain with K-?)). The residue at position 21 (Tyr-21) is a Phosphotyrosine; by EGFR. At Ser-27 the chain carries Phosphoserine; by PKC. 2 positions are modified to phosphoserine: Ser-34 and Ser-37. Thr-41 bears the Phosphothreonine mark. Annexin repeat units follow at residues 42-113, 114-185, 197-269, and 273-344; these read FNPS…ALLK, TPAQ…SLAK, DLAD…AIVK, and SKPA…ALCG. Residue Lys-58 is modified to N6-acetyllysine. 11 residues coordinate Ca(2+): Gly-59, Val-60, Glu-62, Lys-97, Leu-100, Glu-105, Met-127, Gly-129, Gly-131, Thr-132, and Glu-134. The residue at position 136 (Thr-136) is a Phosphothreonine. Ca(2+) is bound by residues Asp-171, Gly-210, and Arg-213. A Glycyl lysine isopeptide (Lys-Gly) (interchain with G-Cter in SUMO1); alternate cross-link involves residue Lys-214. Lys-214 is covalently cross-linked (Glycyl lysine isopeptide (Lys-Gly) (interchain with G-Cter in SUMO2); alternate). Position 215 (Gly-215) interacts with Ca(2+). Lys-239 bears the N6-acetyllysine mark. Residues Asp-253, Glu-255, and Leu-256 each coordinate Ca(2+). Lys-257 participates in a covalent cross-link: Glycyl lysine isopeptide (Lys-Gly) (interchain with G-Cter in SUMO1). Ca(2+)-binding residues include Glu-261, Met-286, Gly-288, and Gly-290. Lys-312 is subject to N6-acetyllysine. An intrachain disulfide couples Cys-324 to Cys-343. Ca(2+)-binding residues include Leu-328, Glu-330, and Thr-331. Lys-332 participates in a covalent cross-link: Glycyl lysine isopeptide (Lys-Gly) (interchain with G-Cter in SUMO1). Glu-336 contributes to the Ca(2+) binding site.

Belongs to the annexin family. As to quaternary structure, homodimer; non-covalently linked. Homodimer; linked by transglutamylation. Homodimers linked by transglutamylation are observed in placenta, but not in other tissues. Interacts with S100A11. Heterotetramer, formed by two molecules each of S100A11 and ANXA1. Interacts with DYSF. Interacts with EGFR. Phosphorylated by protein kinase C, EGFR and TRPM7. Phosphorylated in response to EGF treatment. In terms of processing, sumoylated. Post-translationally, proteolytically cleaved by cathepsin CTSG to release the active N-terminal peptide Ac2-26. Detected in resting neutrophils. Detected in peripheral blood T-cells. Detected in extracellular vesicles in blood serum from patients with inflammatory bowel disease, but not in serum from healthy donors. Detected in placenta (at protein level). Detected in liver.

It localises to the nucleus. The protein localises to the cytoplasm. It is found in the cell projection. The protein resides in the cilium. Its subcellular location is the cell membrane. It localises to the membrane. The protein localises to the endosome membrane. It is found in the basolateral cell membrane. The protein resides in the apical cell membrane. Its subcellular location is the lateral cell membrane. It localises to the secreted. The protein localises to the extracellular space. It is found in the extracellular exosome. The protein resides in the cytoplasmic vesicle. Its subcellular location is the secretory vesicle lumen. It localises to the phagocytic cup. The protein localises to the early endosome. It is found in the cytoplasmic vesicle membrane. In terms of biological role, plays important roles in the innate immune response as effector of glucocorticoid-mediated responses and regulator of the inflammatory process. Has anti-inflammatory activity. Plays a role in glucocorticoid-mediated down-regulation of the early phase of the inflammatory response. Contributes to the adaptive immune response by enhancing signaling cascades that are triggered by T-cell activation, regulates differentiation and proliferation of activated T-cells. Promotes the differentiation of T-cells into Th1 cells and negatively regulates differentiation into Th2 cells. Has no effect on unstimulated T cells. Negatively regulates hormone exocytosis via activation of the formyl peptide receptors and reorganization of the actin cytoskeleton. Has high affinity for Ca(2+) and can bind up to eight Ca(2+) ions. Displays Ca(2+)-dependent binding to phospholipid membranes. Plays a role in the formation of phagocytic cups and phagosomes. Plays a role in phagocytosis by mediating the Ca(2+)-dependent interaction between phagosomes and the actin cytoskeleton. Functionally, functions at least in part by activating the formyl peptide receptors and downstream signaling cascades. Promotes chemotaxis of granulocytes and monocytes via activation of the formyl peptide receptors. Promotes rearrangement of the actin cytoskeleton, cell polarization and cell migration. Promotes resolution of inflammation and wound healing. Acts via neutrophil N-formyl peptide receptors to enhance the release of CXCL2. This is Annexin A1 (ANXA1) from Homo sapiens (Human).